Reading from the N-terminus, the 352-residue chain is Ketoisovalerate oxidoreductase subunit VorB (352 aa).

In terms of assembly, heterotrimer of the VorA, VorB and VorC subunits.

The enzyme catalyses 3-methyl-2-oxobutanoate + 2 oxidized [2Fe-2S]-[ferredoxin] + CoA = 2-methylpropanoyl-CoA + 2 reduced [2Fe-2S]-[ferredoxin] + CO2 + H(+). The chain is Ketoisovalerate oxidoreductase subunit VorB (vorB) from Methanothermobacter marburgensis (strain ATCC BAA-927 / DSM 2133 / JCM 14651 / NBRC 100331 / OCM 82 / Marburg) (Methanobacterium thermoautotrophicum).